A 308-amino-acid polypeptide reads, in one-letter code: Probable inositol oxygenase (308 aa).

Substrate contacts are provided by residues R49 and 106-108 (DDS). Fe cation-binding residues include H119, H144, and D145. Residues K148 and 165–166 (GD) contribute to the substrate site. Fe cation contacts are provided by H217, H243, and D276. 243–244 (HS) contacts substrate.

This sequence belongs to the myo-inositol oxygenase family. It depends on Fe cation as a cofactor.

It is found in the cytoplasm. It catalyses the reaction myo-inositol + O2 = D-glucuronate + H2O + H(+). The protein operates within polyol metabolism; myo-inositol degradation into D-glucuronate; D-glucuronate from myo-inositol: step 1/1. Involved in the biosynthesis of UDP-glucuronic acid (UDP-GlcA), providing nucleotide sugars for cell-wall polymers. May be also involved in plant ascorbate biosynthesis. The chain is Probable inositol oxygenase from Oryza sativa subsp. japonica (Rice).